The following is a 390-amino-acid chain: S-adenosylmethionine synthase 3 (390 aa).

Glutamate 9 serves as a coordination point for Mg(2+). Position 15 (histidine 15) interacts with ATP. Glutamate 43 contacts K(+). Residues glutamate 56 and glutamine 99 each coordinate L-methionine. ATP contacts are provided by residues 167 to 169 (DGK), 235 to 238 (SGRF), aspartate 246, 252 to 253 (RK), alanine 269, lysine 273, and lysine 277. Aspartate 246 serves as a coordination point for L-methionine. Residue lysine 277 coordinates L-methionine.

Belongs to the AdoMet synthase family. Homotetramer. Interacts with GRF3. The cofactor is Mn(2+). Mg(2+) serves as cofactor. Co(2+) is required as a cofactor. Requires K(+) as cofactor.

It localises to the cytoplasm. It catalyses the reaction L-methionine + ATP + H2O = S-adenosyl-L-methionine + phosphate + diphosphate. It functions in the pathway amino-acid biosynthesis; S-adenosyl-L-methionine biosynthesis; S-adenosyl-L-methionine from L-methionine: step 1/1. Inhibited by 5,5'-dithiobis-2-nitrobenzoic acid (DTNB) and N-ethylmaleimide (NEM) (in vitro). Functionally, catalyzes the formation of S-adenosylmethionine from methionine and ATP. The reaction comprises two steps that are both catalyzed by the same enzyme: formation of S-adenosylmethionine (AdoMet) and triphosphate, and subsequent hydrolysis of the triphosphate. Involved in the biosynthesis of lignin. The sequence is that of S-adenosylmethionine synthase 3 (METK3) from Arabidopsis thaliana (Mouse-ear cress).